Consider the following 771-residue polypeptide: Probable dipeptidyl peptidase 4 (771 aa).

Residues 1–16 (MKYSKLLLLLVSVVQA) form the signal peptide. Asparagine 37, asparagine 80, asparagine 114, asparagine 173, asparagine 222, asparagine 470, and asparagine 495 each carry an N-linked (GlcNAc...) asparagine glycan. Residues serine 618, aspartate 695, and histidine 730 each act as charge relay system in the active site.

This sequence belongs to the peptidase S9B family.

It is found in the secreted. It catalyses the reaction Release of an N-terminal dipeptide, Xaa-Yaa-|-Zaa-, from a polypeptide, preferentially when Yaa is Pro, provided Zaa is neither Pro nor hydroxyproline.. In terms of biological role, extracellular dipeptidyl-peptidase which removes N-terminal dipeptides sequentially from polypeptides having unsubstituted N-termini provided that the penultimate residue is proline. The sequence is that of Probable dipeptidyl peptidase 4 (dpp4) from Aspergillus flavus (strain ATCC 200026 / FGSC A1120 / IAM 13836 / NRRL 3357 / JCM 12722 / SRRC 167).